A 187-amino-acid polypeptide reads, in one-letter code: Cerebral dopamine neurotrophic factor (187 aa).

The first 24 residues, 1-24 (MRCTSPAALVTFCAGLWISNHVLA), serve as a signal peptide directing secretion. Cystine bridges form between C37–C124, C40–C113, and C71–C82.

It belongs to the ARMET family.

The protein localises to the secreted. Trophic factor for dopamine neurons. Prevents the 6-hydroxydopamine (6-OHDA)-induced degeneration of dopaminergic neurons. When administered after 6-OHDA-lesioning, restores the dopaminergic function and prevents the degeneration of dopaminergic neurons in substantia nigra. In Rattus norvegicus (Rat), this protein is Cerebral dopamine neurotrophic factor (Cdnf).